A 306-amino-acid chain; its full sequence is Triplex capsid protein 2 (306 aa).

This sequence belongs to the herpesviridae TRX2 protein family. Interacts with TRX1 and major capisd protein/MCP.

The protein localises to the virion. It localises to the host nucleus. Functionally, structural component of the T=16 icosahedral capsid. The capsid is composed of pentamers and hexamers of major capsid protein/MCP, which are linked together by heterotrimers called triplexes. These triplexes are formed by a single molecule of triplex protein 1/TRX1 and two copies of triplex protein 2/TRX2. Additionally, TRX1 is required for efficient transport of TRX2 to the nucleus, which is the site of capsid assembly. The polypeptide is Triplex capsid protein 2 (Human cytomegalovirus (strain AD169) (HHV-5)).